The sequence spans 103 residues: PTS system lactose-specific EIIA component (103 aa).

The 102-residue stretch at 1 to 102 (MNREEVQLLG…MKHLLEFYKR (102 aa)) folds into the PTS EIIA type-3 domain. Histidine 78 (tele-phosphohistidine intermediate) is an active-site residue. Histidine 78 bears the Phosphohistidine; by HPr mark. Residue aspartate 81 coordinates Mg(2+).

As to quaternary structure, homotrimer. Mg(2+) is required as a cofactor.

Its subcellular location is the cytoplasm. Its function is as follows. The phosphoenolpyruvate-dependent sugar phosphotransferase system (sugar PTS), a major carbohydrate active transport system, catalyzes the phosphorylation of incoming sugar substrates concomitantly with their translocation across the cell membrane. The enzyme II LacEF PTS system is involved in lactose transport. In Staphylococcus aureus (strain COL), this protein is PTS system lactose-specific EIIA component.